The chain runs to 150 residues: Molybdopterin synthase catalytic subunit (150 aa).

Substrate is bound by residues 37–39, 103–104, K119, and 126–128; these read KVR, HR, and KRE.

This sequence belongs to the MoaE family. Heterotetramer of 2 MoaD subunits and 2 MoaE subunits. Also stable as homodimer. The enzyme changes between these two forms during catalysis.

The enzyme catalyses 2 [molybdopterin-synthase sulfur-carrier protein]-C-terminal-Gly-aminoethanethioate + cyclic pyranopterin phosphate + H2O = molybdopterin + 2 [molybdopterin-synthase sulfur-carrier protein]-C-terminal Gly-Gly + 2 H(+). Its pathway is cofactor biosynthesis; molybdopterin biosynthesis. Converts molybdopterin precursor Z into molybdopterin. This requires the incorporation of two sulfur atoms into precursor Z to generate a dithiolene group. The sulfur is provided by MoaD. The polypeptide is Molybdopterin synthase catalytic subunit (moaE) (Salmonella typhi).